We begin with the raw amino-acid sequence, 338 residues long: Fe-S cluster assembly protein DRE2 (338 aa).

An N-terminal SAM-like domain region spans residues 1-165; the sequence is MAKSGLLLIH…LPSFKKAANK (165 aa). A linker region spans residues 166 to 232; it reads PLPTFKKKVE…DDLLNEEDAK (67 aa). The tract at residues 181 to 223 is disordered; it reads VEARVHKAENDDDELEDEEDENLFDASRSKYFDEDDSESLDED. Composition is skewed to acidic residues over residues 190 to 203 and 213 to 223; these read NDDD…DENL and DEDDSESLDED. Positions 242, 253, 256, and 258 each coordinate [2Fe-2S] cluster. Residues 242–258 form a fe-S binding site A region; sequence CGKSKTKKKKACKDCSC. [4Fe-4S] cluster is bound by residues C301, C304, C312, and C315. 2 short sequence motifs (cx2C motif) span residues 301-304 and 312-315; these read CGSC and CTGC. The tract at residues 301–315 is fe-S binding site B; it reads CGSCSLGDAFRCTGC.

The protein belongs to the anamorsin family. As to quaternary structure, monomer. Interacts with TAH18. Interacts with MIA40. Requires [2Fe-2S] cluster as cofactor. [4Fe-4S] cluster serves as cofactor.

Its subcellular location is the cytoplasm. It localises to the mitochondrion intermembrane space. In terms of biological role, component of the cytosolic iron-sulfur (Fe-S) protein assembly (CIA) machinery required for the maturation of extramitochondrial Fe-S proteins. Part of an electron transfer chain functioning in an early step of cytosolic Fe-S biogenesis, facilitating the de novo assembly of a [4Fe-4S] cluster on the scaffold complex CFD1-NBP35. Electrons are transferred to DRE2 from NADPH via the FAD- and FMN-containing protein TAH18. TAH18-DRE2 are also required for the assembly of the diferric tyrosyl radical cofactor of ribonucleotide reductase (RNR), probably by providing electrons for reduction during radical cofactor maturation in the catalytic small subunit RNR2. This is Fe-S cluster assembly protein DRE2 from Candida glabrata (strain ATCC 2001 / BCRC 20586 / JCM 3761 / NBRC 0622 / NRRL Y-65 / CBS 138) (Yeast).